The sequence spans 313 residues: Peptidyl-prolyl cis-trans isomerase 9 (313 aa).

The region spanning 9 to 174 is the PPIase cyclophilin-type domain; it reads FLDMALDEKP…AKVRIFNSGE (166 aa). Basic and acidic residues-rich tracts occupy residues 216–230 and 253–269; these read EERESDFSSKTESSR and RGDRNRRTQRADRKDDF. Disordered stretches follow at residues 216–274 and 288–313; these read EERE…IAVR and TPEHWRRNAPSKWQQGSYTHPVDLQP.

It belongs to the cyclophilin-type PPIase family.

It carries out the reaction [protein]-peptidylproline (omega=180) = [protein]-peptidylproline (omega=0). Functionally, PPIases accelerate the folding of proteins. It catalyzes the cis-trans isomerization of proline imid ic peptide bonds in oligopeptides. Thought to function as a catalyst in the folding and modification of cuticle collagens. In Caenorhabditis briggsae, this protein is Peptidyl-prolyl cis-trans isomerase 9.